The chain runs to 263 residues: Protein TILLER ANGLE CONTROL 1 (263 aa).

Positions 55 to 61 (GILAIGT) match the IGT motif motif. The tract at residues 243–263 (GKKIHPEQLNGRSNAEGPLTA) is disordered.

This sequence belongs to the TAC family. In terms of tissue distribution, highly expressed in leaf sheath pulvinus. Expressed in shoot apical meristem and leaves.

Its function is as follows. Involved in the regulation of leaf growth angle. Promotes horizontal shoot growth. This Zea mays (Maize) protein is Protein TILLER ANGLE CONTROL 1.